Reading from the N-terminus, the 300-residue chain is D-alanine--D-alanine ligase (300 aa).

Residues 99-293 enclose the ATP-grasp domain; sequence KKILKYANIN…FAELLNSIVK (195 aa). Position 126–181 (126–181) interacts with ATP; that stretch reads IEKIGYPVFVKPNSGGSSVATNLVKDKEGIKEAVELALKYDKEVMIENYTKGEEIT. Residues Asp248, Glu260, and Asn262 each contribute to the Mg(2+) site.

It belongs to the D-alanine--D-alanine ligase family. Requires Mg(2+) as cofactor. Mn(2+) serves as cofactor.

Its subcellular location is the cytoplasm. The enzyme catalyses 2 D-alanine + ATP = D-alanyl-D-alanine + ADP + phosphate + H(+). It functions in the pathway cell wall biogenesis; peptidoglycan biosynthesis. Cell wall formation. The polypeptide is D-alanine--D-alanine ligase (Clostridium botulinum (strain Okra / Type B1)).